Reading from the N-terminus, the 569-residue chain is Urease subunit alpha (569 aa).

The 439-residue stretch at 131–569 folds into the Urease domain; that stretch reads GGIDTHIHFI…LPLAQRYLLL (439 aa). The Ni(2+) site is built by His-136, His-138, and Lys-219. Lys-219 carries the post-translational modification N6-carboxylysine. His-221 provides a ligand contact to substrate. The Ni(2+) site is built by His-248 and His-274. Residue His-322 is the Proton donor of the active site. Asp-362 is a binding site for Ni(2+).

It belongs to the metallo-dependent hydrolases superfamily. Urease alpha subunit family. Heterotrimer of UreA (gamma), UreB (beta) and UreC (alpha) subunits. Three heterotrimers associate to form the active enzyme. The cofactor is Ni cation. Carboxylation allows a single lysine to coordinate two nickel ions.

It localises to the cytoplasm. The enzyme catalyses urea + 2 H2O + H(+) = hydrogencarbonate + 2 NH4(+). It participates in nitrogen metabolism; urea degradation; CO(2) and NH(3) from urea (urease route): step 1/1. This chain is Urease subunit alpha, found in Synechococcus sp. (strain CC9605).